The chain runs to 469 residues: Ribulose bisphosphate carboxylase large chain (469 aa).

The propeptide occupies 1–2; the sequence is MS. Position 3 is an N-acetylproline (P3). Residue K14 is modified to N6,N6,N6-trimethyllysine. The substrate site is built by N123 and T173. The active-site Proton acceptor is K175. K177 lines the substrate pocket. The Mg(2+) site is built by K201, D203, and E204. An N6-carboxylysine modification is found at K201. The Proton acceptor role is filled by H294. Residues R295, H327, and S379 each contribute to the substrate site.

It belongs to the RuBisCO large chain family. Type I subfamily. Heterohexadecamer of 8 large chains and 8 small chains; disulfide-linked. The disulfide link is formed within the large subunit homodimers. Mg(2+) is required as a cofactor. In terms of processing, the disulfide bond which can form in the large chain dimeric partners within the hexadecamer appears to be associated with oxidative stress and protein turnover.

It is found in the plastid. It localises to the chloroplast. It catalyses the reaction 2 (2R)-3-phosphoglycerate + 2 H(+) = D-ribulose 1,5-bisphosphate + CO2 + H2O. The enzyme catalyses D-ribulose 1,5-bisphosphate + O2 = 2-phosphoglycolate + (2R)-3-phosphoglycerate + 2 H(+). Its function is as follows. RuBisCO catalyzes two reactions: the carboxylation of D-ribulose 1,5-bisphosphate, the primary event in carbon dioxide fixation, as well as the oxidative fragmentation of the pentose substrate in the photorespiration process. Both reactions occur simultaneously and in competition at the same active site. The polypeptide is Ribulose bisphosphate carboxylase large chain (Dianthus caryophyllus (Carnation)).